Consider the following 153-residue polypeptide: Small ribosomal subunit protein uS13 (153 aa).

This sequence belongs to the universal ribosomal protein uS13 family. In terms of assembly, part of the 30S ribosomal subunit. Forms a loose heterodimer with protein S19. Forms two bridges to the 50S subunit in the 70S ribosome.

Its function is as follows. Located at the top of the head of the 30S subunit, it contacts several helices of the 16S rRNA. In the 70S ribosome it contacts the 23S rRNA (bridge B1a) and protein L5 of the 50S subunit (bridge B1b), connecting the 2 subunits; these bridges are implicated in subunit movement. This is Small ribosomal subunit protein uS13 from Pyrobaculum islandicum (strain DSM 4184 / JCM 9189 / GEO3).